A 251-amino-acid chain; its full sequence is Ditrans,polycis-undecaprenyl-diphosphate synthase ((2E,6E)-farnesyl-diphosphate specific) (251 aa).

Asp21 is an active-site residue. Asp21 contributes to the Mg(2+) binding site. Substrate-binding positions include 22–25 (GNNR), Trp26, His38, and 66–68 (SSE). Residue Asn69 is the Proton acceptor of the active site. Residues Trp70, Arg72, Arg189, and 195–197 (RIS) each bind substrate. Glu208 is a Mg(2+) binding site.

It belongs to the UPP synthase family. As to quaternary structure, homodimer. The cofactor is Mg(2+).

It catalyses the reaction 8 isopentenyl diphosphate + (2E,6E)-farnesyl diphosphate = di-trans,octa-cis-undecaprenyl diphosphate + 8 diphosphate. Functionally, catalyzes the sequential condensation of isopentenyl diphosphate (IPP) with (2E,6E)-farnesyl diphosphate (E,E-FPP) to yield (2Z,6Z,10Z,14Z,18Z,22Z,26Z,30Z,34E,38E)-undecaprenyl diphosphate (di-trans,octa-cis-UPP). UPP is the precursor of glycosyl carrier lipid in the biosynthesis of bacterial cell wall polysaccharide components such as peptidoglycan and lipopolysaccharide. The sequence is that of Ditrans,polycis-undecaprenyl-diphosphate synthase ((2E,6E)-farnesyl-diphosphate specific) from Pseudomonas syringae pv. tomato (strain ATCC BAA-871 / DC3000).